Consider the following 231-residue polypeptide: Ribonuclease P protein component 3 (231 aa).

Belongs to the eukaryotic/archaeal RNase P protein component 3 family. As to quaternary structure, consists of a catalytic RNA component and at least 4-5 protein subunits.

The protein resides in the cytoplasm. It carries out the reaction Endonucleolytic cleavage of RNA, removing 5'-extranucleotides from tRNA precursor.. Its function is as follows. Part of ribonuclease P, a protein complex that generates mature tRNA molecules by cleaving their 5'-ends. This chain is Ribonuclease P protein component 3, found in Methanococcus vannielii (strain ATCC 35089 / DSM 1224 / JCM 13029 / OCM 148 / SB).